The primary structure comprises 48 residues: Histone H4 (48 aa).

The segment covering M1–K14 has biased composition (gly residues). The segment at M1–R23 is disordered.

This sequence belongs to the histone H4 family. As to quaternary structure, the nucleosome is a histone octamer containing two molecules each of H2A, H2B, H3 and H4 assembled in one H3-H4 heterotetramer and two H2A-H2B heterodimers. The octamer wraps approximately 147 bp of DNA.

Its subcellular location is the nucleus. The protein resides in the chromosome. In terms of biological role, core component of nucleosome. Nucleosomes wrap and compact DNA into chromatin, limiting DNA accessibility to the cellular machineries which require DNA as a template. Histones thereby play a central role in transcription regulation, DNA repair, DNA replication and chromosomal stability. DNA accessibility is regulated via a complex set of post-translational modifications of histones, also called histone code, and nucleosome remodeling. This Blepharisma japonicum protein is Histone H4.